The following is an 852-amino-acid chain: Bifunctional isopimaradiene synthase, chloroplastic (852 aa).

Residues 1 to 53 (HHLTANTQSIPHFSTTLNAGSSARKRRSLYLRWGKGSNKIIACVGEGATSVPY) constitute a chloroplast transit peptide. A substrate-binding site is contributed by lysine 252. Residues aspartate 385 and aspartate 387 each contribute to the Mg(2+) site. The short motif at 385 to 388 (DIDD) is the DXDD motif element. Lysine 472 contributes to the substrate binding site. Residues aspartate 604, aspartate 608, asparagine 748, threonine 752, and glutamate 756 each coordinate Mg(2+). Residues 604 to 608 (DDLYD) carry the DDXXD motif motif.

Belongs to the terpene synthase family. Tpsd subfamily. It depends on Mg(2+) as a cofactor.

Its subcellular location is the plastid. The protein localises to the chloroplast. It catalyses the reaction (2E,6E,10E)-geranylgeranyl diphosphate = (+)-copalyl diphosphate. The catalysed reaction is (+)-copalyl diphosphate = isopimara-7,15-diene + diphosphate. It functions in the pathway terpene metabolism; oleoresin biosynthesis. Functionally, involved in defensive oleoresin formation in conifers in response to insect attack or other injury. Involved in diterpene (C20) olefins biosynthesis. Bifunctional enzyme that catalyzes two sequential cyclizations of geranylgeranyl diphosphate (GGPP) to isopimara-7,15-diene. This chain is Bifunctional isopimaradiene synthase, chloroplastic (TPS-ISO), found in Abies balsamea (Balsam fir).